The primary structure comprises 432 residues: uncharacterized protein (432 aa).

SIS domains follow at residues 105–244 (WLTE…DLVS) and 277–422 (CDKK…VDLP).

This is an uncharacterized protein from Saccharomyces cerevisiae (strain ATCC 204508 / S288c) (Baker's yeast).